We begin with the raw amino-acid sequence, 492 residues long: Coagulation factor X (492 aa).

An N-terminal signal peptide occupies residues 1–23 (MAGLLHLVLLSTALGGLLRPAGS). A propeptide spanning residues 24–40 (VFLPRDQAHRVLQRARR) is cleaved from the precursor. In terms of domain architecture, Gla spans 41 to 85 (ANSFLEEVKQGNLERECLEEACSLEEAREVFEDAEQTDEFWSKYK). A 4-carboxyglutamate mark is found at E46, E47, E54, E56, E59, E60, E65, E66, E69, E72, E75, and E79. C57 and C62 are oxidised to a cystine. Residues 86 to 122 (DGDQCEGHPCLNQGHCKDGIGDYTCTCAEGFEGKNCE) form the EGF-like 1; calcium-binding domain. 11 disulfides stabilise this stretch: C90–C101, C95–C110, C112–C121, C129–C140, C136–C149, C151–C164, C172–C341, C240–C245, C260–C276, C389–C403, and C414–C442. (3R)-3-hydroxyaspartate is present on D103. One can recognise an EGF-like 2 domain in the interval 125–165 (TREICSLDNGGCDQFCREERSEVRCSCAHGYVLGDDSKSCV). The propeptide at 183-233 (WAIHTSEDALDASELEHYDPADLSPTESSLDLLGLNRTEPSAGEDGSQVVR) is activation peptide. Y200 is modified (sulfotyrosine). O-linked (GalNAc...) threonine glycosylation occurs at T208. N218 carries an N-linked (GlcNAc...) asparagine glycan. The Peptidase S1 domain maps to 234–466 (IVGGRDCAEG…FLKWIDKIMK (233 aa)). Catalysis depends on charge relay system residues H275 and D321. The Charge relay system role is filled by S418. The disordered stretch occupies residues 472 to 492 (AGSRGHSEAPATWTVPPPLPL). Positions 476-492 (GHSEAPATWTVPPPLPL) are cleaved as a propeptide — may be removed but is not necessary for activation. O-linked (GalNAc...) threonine glycosylation is present at T485.

This sequence belongs to the peptidase S1 family. The two chains are formed from a single-chain precursor by the excision of two Arg residues and are held together by 1 or more disulfide bonds. Forms a heterodimer with SERPINA5. Interacts (activated) with guianensin, an anticoagulant protein from Simulium guianense saliva. Interacts (activated) with simukunin, an anticoagulant protein from Simulium vittatum saliva. Post-translationally, the vitamin K-dependent, enzymatic carboxylation of some glutamate residues allows the modified protein to bind calcium. N- and O-glycosylated. In terms of processing, proteolytically cleaved and activated by cathepsin CTSG. The activation peptide is cleaved by factor IXa (in the intrinsic pathway), or by factor VIIa (in the extrinsic pathway). Post-translationally, the iron and 2-oxoglutarate dependent 3-hydroxylation of aspartate and asparagine is (R) stereospecific within EGF domains.

Its subcellular location is the secreted. The catalysed reaction is Selective cleavage of Arg-|-Thr and then Arg-|-Ile bonds in prothrombin to form thrombin.. With respect to regulation, inhibited by SERPINA5. In terms of biological role, factor Xa is a vitamin K-dependent glycoprotein that converts prothrombin to thrombin in the presence of factor Va, calcium and phospholipid during blood clotting. Factor Xa activates pro-inflammatory and pro-fibrotic signaling pathways in a protease-activated receptor (PAR)-dependent manner. The sequence is that of Coagulation factor X (F10) from Bos taurus (Bovine).